The following is a 515-amino-acid chain: 2-isopropylmalate synthase (515 aa).

One can recognise a Pyruvate carboxyltransferase domain in the interval 5–267 (VIIFDTTLRD…HTGLDHKEIH (263 aa)). Residues aspartate 14, histidine 202, histidine 204, and asparagine 238 each coordinate Mn(2+). A regulatory domain region spans residues 392–515 (KLNYLSVQSG…EMKQQKFATV (124 aa)).

The protein belongs to the alpha-IPM synthase/homocitrate synthase family. LeuA type 1 subfamily. In terms of assembly, homodimer. Mn(2+) is required as a cofactor.

The protein localises to the cytoplasm. It carries out the reaction 3-methyl-2-oxobutanoate + acetyl-CoA + H2O = (2S)-2-isopropylmalate + CoA + H(+). It functions in the pathway amino-acid biosynthesis; L-leucine biosynthesis; L-leucine from 3-methyl-2-oxobutanoate: step 1/4. Its function is as follows. Catalyzes the condensation of the acetyl group of acetyl-CoA with 3-methyl-2-oxobutanoate (2-ketoisovalerate) to form 3-carboxy-3-hydroxy-4-methylpentanoate (2-isopropylmalate). The protein is 2-isopropylmalate synthase of Vibrio atlanticus (strain LGP32) (Vibrio splendidus (strain Mel32)).